The sequence spans 142 residues: Large ribosomal subunit protein uL13 (142 aa).

The protein belongs to the universal ribosomal protein uL13 family. As to quaternary structure, part of the 50S ribosomal subunit.

Functionally, this protein is one of the early assembly proteins of the 50S ribosomal subunit, although it is not seen to bind rRNA by itself. It is important during the early stages of 50S assembly. This is Large ribosomal subunit protein uL13 from Acinetobacter baumannii (strain AB0057).